The chain runs to 102 residues: Small ribosomal subunit protein eS24 (102 aa).

The protein belongs to the eukaryotic ribosomal protein eS24 family.

The polypeptide is Small ribosomal subunit protein eS24 (Methanococcus maripaludis (strain C5 / ATCC BAA-1333)).